A 159-amino-acid chain; its full sequence is Ribosomal RNA large subunit methyltransferase H (159 aa).

S-adenosyl-L-methionine contacts are provided by residues leucine 76, glycine 107, and 126 to 131 (LSSLTL).

Belongs to the RNA methyltransferase RlmH family. As to quaternary structure, homodimer.

The protein localises to the cytoplasm. It carries out the reaction pseudouridine(1915) in 23S rRNA + S-adenosyl-L-methionine = N(3)-methylpseudouridine(1915) in 23S rRNA + S-adenosyl-L-homocysteine + H(+). In terms of biological role, specifically methylates the pseudouridine at position 1915 (m3Psi1915) in 23S rRNA. In Cupriavidus pinatubonensis (strain JMP 134 / LMG 1197) (Cupriavidus necator (strain JMP 134)), this protein is Ribosomal RNA large subunit methyltransferase H.